The sequence spans 120 residues: Large-conductance mechanosensitive channel (120 aa).

Transmembrane regions (helical) follow at residues 7–27 (EFAL…GAAF) and 64–84 (GLFI…FIFV).

This sequence belongs to the MscL family. Homopentamer.

It is found in the cell membrane. Functionally, channel that opens in response to stretch forces in the membrane lipid bilayer. May participate in the regulation of osmotic pressure changes within the cell. The protein is Large-conductance mechanosensitive channel of Staphylococcus aureus (strain Mu3 / ATCC 700698).